The primary structure comprises 115 residues: T cell receptor beta variable 7-2 (115 aa).

The first 21 residues, 1–21 (MGTRLLFWVAFCLLGADHTGA), serve as a signal peptide directing secretion. Positions 22–115 (GVSQSPSNKV…SAVYLCASSL (94 aa)) constitute an Ig-like domain. A disulfide bridge links cysteine 42 with cysteine 111.

In terms of assembly, alpha-beta TR is a heterodimer composed of an alpha and beta chain; disulfide-linked. The alpha-beta TR is associated with the transmembrane signaling CD3 coreceptor proteins to form the TR-CD3 (TcR or TCR). The assembly of alpha-beta TR heterodimers with CD3 occurs in the endoplasmic reticulum where a single alpha-beta TR heterodimer associates with one CD3D-CD3E heterodimer, one CD3G-CD3E heterodimer and one CD247 homodimer forming a stable octameric structure. CD3D-CD3E and CD3G-CD3E heterodimers preferentially associate with TR alpha and TR beta chains, respectively. The association of the CD247 homodimer is the last step of TcR assembly in the endoplasmic reticulum and is required for transport to the cell surface.

It is found in the cell membrane. Its function is as follows. V region of the variable domain of T cell receptor (TR) beta chain that participates in the antigen recognition. Alpha-beta T cell receptors are antigen specific receptors which are essential to the immune response and are present on the cell surface of T lymphocytes. Recognize peptide-major histocompatibility (MH) (pMH) complexes that are displayed by antigen presenting cells (APC), a prerequisite for efficient T cell adaptive immunity against pathogens. Binding of alpha-beta TR to pMH complex initiates TR-CD3 clustering on the cell surface and intracellular activation of LCK that phosphorylates the ITAM motifs of CD3G, CD3D, CD3E and CD247 enabling the recruitment of ZAP70. In turn ZAP70 phosphorylates LAT, which recruits numerous signaling molecules to form the LAT signalosome. The LAT signalosome propagates signal branching to three major signaling pathways, the calcium, the mitogen-activated protein kinase (MAPK) kinase and the nuclear factor NF-kappa-B (NF-kB) pathways, leading to the mobilization of transcription factors that are critical for gene expression and essential for T cell growth and differentiation. The T cell repertoire is generated in the thymus, by V-(D)-J rearrangement. This repertoire is then shaped by intrathymic selection events to generate a peripheral T cell pool of self-MH restricted, non-autoaggressive T cells. Post-thymic interaction of alpha-beta TR with the pMH complexes shapes TR structural and functional avidity. The sequence is that of T cell receptor beta variable 7-2 from Homo sapiens (Human).